The following is a 388-amino-acid chain: Trichodiene synthase (388 aa).

Residues Asp109, Glu173, Asn234, Ser238, Glu242, and Asp248 each contribute to the Mg(2+) site. Residues 109–113 (DDSRE) form an aspartate-rich domain region.

It belongs to the trichodiene synthase family. Mg(2+) serves as cofactor. Mn(2+) is required as a cofactor.

The catalysed reaction is (2E,6E)-farnesyl diphosphate = trichodiene + diphosphate. It participates in sesquiterpene biosynthesis; trichothecene biosynthesis. Its function is as follows. Trichodiene synthase; part of the gene cluster that mediates the production of the antimicrobial trichothecene harzianum A (HA) that plays a role in Botrytis cinerea antagonistic activity and plant defense priming. The biosynthesis of harzianum A begins with the cyclization of farnesyl diphosphate to trichodiene and is catalyzed by the trichodiene synthase TRI5. Trichodiene undergoes a series of oxygenations catalyzed by the cytochrome P450 monooxygenase TRI4. TRI4 controls the addition of 3 oxygens at C-2, C-11, and the C-12, C-13-epoxide to form the intermediate isotrichodiol. Isotrichodiol then undergoes a non-enzymatic isomerization and cyclization to form 12,13-epoxytrichothec-9-ene (EPT) which is further converted to trichodermol by the cytochrome P450 monooxygenase TRI11 via C-4 hydroxylation. The last step of HA synthesis is esterification of an octatriendioyl moiety to the C-4 oxygen of trichodermol. The octatriendioyl moiety is probably produced by the polyketide synthase TRI17 and the esterification performed by the trichothecene O-acetyltransferase TRI3. The sequence is that of Trichodiene synthase from Trichoderma arundinaceum.